The primary structure comprises 597 residues: Aspartate--tRNA(Asp/Asn) ligase (597 aa).

Glutamate 170 is a binding site for L-aspartate. Residues 194–197 (QLFK) form an aspartate region. Arginine 216 contacts L-aspartate. ATP contacts are provided by residues 216-218 (RDE) and glutamine 225. Histidine 448 is a binding site for L-aspartate. An ATP-binding site is contributed by glutamate 482. Arginine 489 serves as a coordination point for L-aspartate. 534–537 (GWDR) serves as a coordination point for ATP. The tract at residues 558 to 597 (GGGVDPLTDAPAPITAAQRKESGIDAKPEKAEKAGKPADA) is disordered. Basic and acidic residues predominate over residues 575–597 (QRKESGIDAKPEKAEKAGKPADA).

This sequence belongs to the class-II aminoacyl-tRNA synthetase family. Type 1 subfamily. Homodimer.

It is found in the cytoplasm. It carries out the reaction tRNA(Asx) + L-aspartate + ATP = L-aspartyl-tRNA(Asx) + AMP + diphosphate. Aspartyl-tRNA synthetase with relaxed tRNA specificity since it is able to aspartylate not only its cognate tRNA(Asp) but also tRNA(Asn). Reaction proceeds in two steps: L-aspartate is first activated by ATP to form Asp-AMP and then transferred to the acceptor end of tRNA(Asp/Asn). The sequence is that of Aspartate--tRNA(Asp/Asn) ligase from Mycobacteroides abscessus (strain ATCC 19977 / DSM 44196 / CCUG 20993 / CIP 104536 / JCM 13569 / NCTC 13031 / TMC 1543 / L948) (Mycobacterium abscessus).